Consider the following 773-residue polypeptide: Probable dipeptidyl peptidase 4 (773 aa).

A signal peptide spans 1–18; that stretch reads MKLSVLSVLLVSVAQAAA. N-linked (GlcNAc...) asparagine glycosylation is found at Asn-37, Asn-80, Asn-112, Asn-220, Asn-471, and Asn-496. The active-site Charge relay system is the Ser-619. Asn-671 carries N-linked (GlcNAc...) asparagine glycosylation. Catalysis depends on charge relay system residues Asp-696 and His-731.

This sequence belongs to the peptidase S9B family.

Its subcellular location is the secreted. The catalysed reaction is Release of an N-terminal dipeptide, Xaa-Yaa-|-Zaa-, from a polypeptide, preferentially when Yaa is Pro, provided Zaa is neither Pro nor hydroxyproline.. In terms of biological role, extracellular dipeptidyl-peptidase which removes N-terminal dipeptides sequentially from polypeptides having unsubstituted N-termini provided that the penultimate residue is proline. The sequence is that of Probable dipeptidyl peptidase 4 (dpp4) from Emericella nidulans (strain FGSC A4 / ATCC 38163 / CBS 112.46 / NRRL 194 / M139) (Aspergillus nidulans).